Reading from the N-terminus, the 624-residue chain is MAEASRWHRGGASKHKLHYRKEVEITTTLQELLLYFIFLINLCILTFGMVNPHMYYLNKVMSSLFLDTSVPGEERTNFKSIRSITDFWKFMEGPLLEGLYWDSWYNNQQLYNLKNSSRIYYENILLGVPRVRQLKVRNNTCKVYSSFQSLMSECYGKYTSANEDLSNFGLQINTEWRYSTSNTNSPWHWGFLGVYRNGGYIFTLSKSKSETKNKFIDLRLNSWITRGTRVIFIDFSLYNANVNLFCIIRLVAEFPATGGILTSWQFYSVKLLRYVSYYDYFIASCEITFCIFLFVFTTQEVKKIKEFKSAYFKSIWNWLELLLLLLCFVAVSFNTYYNVQIFLLLGQLLKSTEKYSDFYFLACWHIYYNNIIAITIFFAWIKIFKFISFNKTMSQLSSTLSRCVKDIVGFAIMFFIIFFAYAQLGFLVFGSQVDDFSTFQNSIFAQFRIVLGDFNFAGIQQANPILGPIYFITFIFFVFFVLLNMFLAIINDTYSEVKADYSIGRRLDFELGKMIKQSYKNVLEKFRLKKAQKDEDKKTKGSGDLAEQARREGFDENEIQNAEQMKKWKERLEKKYYSMEIQDDYQPVTQEEFRELFLYAVELEKELHYINLKLNQVVRKVSAL.

The Cytoplasmic portion of the chain corresponds to 1-31; sequence MAEASRWHRGGASKHKLHYRKEVEITTTLQE. The helical transmembrane segment at 32–52 threads the bilayer; that stretch reads LLLYFIFLINLCILTFGMVNP. The Extracellular portion of the chain corresponds to 53 to 276; the sequence is HMYYLNKVMS…YSVKLLRYVS (224 aa). N115 and N138 each carry an N-linked (GlcNAc...) asparagine glycan. A helical transmembrane segment spans residues 277–297; sequence YYDYFIASCEITFCIFLFVFT. Residues 298 to 314 lie on the Cytoplasmic side of the membrane; the sequence is TQEVKKIKEFKSAYFKS. The chain crosses the membrane as a helical span at residues 315–335; sequence IWNWLELLLLLLCFVAVSFNT. Over 336–360 the chain is Extracellular; the sequence is YYNVQIFLLLGQLLKSTEKYSDFYF. Residues 361 to 381 traverse the membrane as a helical segment; the sequence is LACWHIYYNNIIAITIFFAWI. At 382–406 the chain is on the cytoplasmic side; that stretch reads KIFKFISFNKTMSQLSSTLSRCVKD. A helical membrane pass occupies residues 407–427; sequence IVGFAIMFFIIFFAYAQLGFL. Residues 428–469 are Extracellular-facing; the sequence is VFGSQVDDFSTFQNSIFAQFRIVLGDFNFAGIQQANPILGPI. Residues 470–490 form a helical membrane-spanning segment; the sequence is YFITFIFFVFFVLLNMFLAII. Residues 491–624 are Cytoplasmic-facing; sequence NDTYSEVKAD…NQVVRKVSAL (134 aa). Positions 556-576 form a coiled coil; the sequence is ENEIQNAEQMKKWKERLEKKY.

This sequence belongs to the polycystin family. As to quaternary structure, interacts with TRPC1 and TRPC5. Expressed only in testis. Expressed also in brain and kidney. As to expression, expressed only in transformed lymphoblasts.

It is found in the membrane. Exhibits a lower single conductance but no spontaneous channel activity. May function as a regulator of calcium channels or a channel component involving Ca2(+) homeostasis. The protein is Polycystin-2-like protein 2 of Homo sapiens (Human).